A 215-amino-acid polypeptide reads, in one-letter code: Sec-independent protein translocase protein TatB (215 aa).

The helical transmembrane segment at 1-21 (MLDIGWTELVVIAIVLIIVVG) threads the bilayer. Disordered regions lie at residues 95–119 (DLQK…EPVN) and 138–215 (AVSS…KGDA). The segment covering 145–157 (QMDRAADVPKASE) has biased composition (basic and acidic residues). Residues 203–215 (SKTRAASRKKGDA) show a composition bias toward basic residues.

The protein belongs to the TatB family. In terms of assembly, the Tat system comprises two distinct complexes: a TatABC complex, containing multiple copies of TatA, TatB and TatC subunits, and a separate TatA complex, containing only TatA subunits. Substrates initially bind to the TatABC complex, which probably triggers association of the separate TatA complex to form the active translocon.

It localises to the cell inner membrane. Part of the twin-arginine translocation (Tat) system that transports large folded proteins containing a characteristic twin-arginine motif in their signal peptide across membranes. Together with TatC, TatB is part of a receptor directly interacting with Tat signal peptides. TatB may form an oligomeric binding site that transiently accommodates folded Tat precursor proteins before their translocation. The polypeptide is Sec-independent protein translocase protein TatB (Rhizobium meliloti (strain 1021) (Ensifer meliloti)).